Reading from the N-terminus, the 186-residue chain is MSVADIKKGVEQKMQRSIEAFKNDLAKIRTGRAHTGLLDHVQVDYYGSMVPISQVANLTLVDARTIGVQPWEKNMVAKVEKAIREADLGLNPATAGDLIRVPMPPLTEERRRELTKVVKGEGETAKVAIRNLRRDANEALKKLVKDKEISEDDERRAGDDVQKLTDKHVAEIDKLVQTKEAEIMTV.

Belongs to the RRF family.

It localises to the cytoplasm. Its function is as follows. Responsible for the release of ribosomes from messenger RNA at the termination of protein biosynthesis. May increase the efficiency of translation by recycling ribosomes from one round of translation to another. The sequence is that of Ribosome-recycling factor from Burkholderia multivorans (strain ATCC 17616 / 249).